The sequence spans 308 residues: 1,4-dihydroxy-2-naphthoate octaprenyltransferase (308 aa).

The next 9 membrane-spanning stretches (helical) occupy residues 22–42 (TLPL…WANP), 47–67 (GLVM…SNFA), 101–121 (WGLI…IGIA), 129–149 (FAFA…TVGV), 153–173 (GYMG…GVGG), 186–206 (IILP…INNL), 235–255 (ILLS…AISW), 256–276 (TNYL…FVYC), and 286–306 (ILAQ…LGLL).

The protein belongs to the MenA family. Type 1 subfamily.

It localises to the cell inner membrane. It carries out the reaction an all-trans-polyprenyl diphosphate + 1,4-dihydroxy-2-naphthoate + H(+) = a 2-demethylmenaquinol + CO2 + diphosphate. It participates in quinol/quinone metabolism; menaquinone biosynthesis; menaquinol from 1,4-dihydroxy-2-naphthoate: step 1/2. Conversion of 1,4-dihydroxy-2-naphthoate (DHNA) to demethylmenaquinone (DMK). This Haemophilus influenzae (strain ATCC 51907 / DSM 11121 / KW20 / Rd) protein is 1,4-dihydroxy-2-naphthoate octaprenyltransferase.